The following is a 210-amino-acid chain: Urease accessory protein UreG (210 aa).

15 to 22 serves as a coordination point for GTP; sequence GPVGSGKT.

The protein belongs to the SIMIBI class G3E GTPase family. UreG subfamily. In terms of assembly, homodimer. UreD, UreF and UreG form a complex that acts as a GTP-hydrolysis-dependent molecular chaperone, activating the urease apoprotein by helping to assemble the nickel containing metallocenter of UreC. The UreE protein probably delivers the nickel.

The protein localises to the cytoplasm. Facilitates the functional incorporation of the urease nickel metallocenter. This process requires GTP hydrolysis, probably effectuated by UreG. This chain is Urease accessory protein UreG, found in Ralstonia nicotianae (strain ATCC BAA-1114 / GMI1000) (Ralstonia solanacearum).